A 286-amino-acid chain; its full sequence is Citrullinase (286 aa).

The CN hydrolase domain maps to 4–258 (IKVAVVQLSF…DDILYATFDF (255 aa)). Catalysis depends on Glu43, which acts as the Proton acceptor. The active site involves Lys116. Residue Cys153 is the Nucleophile of the active site.

This sequence belongs to the carbon-nitrogen hydrolase superfamily.

The enzyme catalyses L-citrulline + H2O + 2 H(+) = L-ornithine + NH4(+) + CO2. Catalyzes the degradation of citrulline into ornithine, carbon dioxide and ammonia. Contributes to intramacrophage survival, in vivo growth and pathogenesis. In Francisella tularensis subsp. tularensis (strain SCHU S4 / Schu 4), this protein is Citrullinase.